Consider the following 318-residue polypeptide: MPNIVLFSGSSHQDLSQRVADRLGLELGKVVTKKFSNQETSVEIGESVRGEDVYIIQSGCGEINDNLMELLIMINACKIASSSRVTAVIPCFPYARQDKKDKSRAPISAKLVANMLSVAGADHIITMDLHASQIQGFFDIPVDNLYAEPAVLQWIRENITEWRNCIIVSPDAGGAKRVTSIADRLNVEFALIHKERKKANEVDRMVLVGDVKDRVAILVDDMADTCGTICHAADKLLSAGATKVYAILTHGIFSGPAISRINSAAFEAVVVTNTIPQEDKMKHCSKIQVIDISMILAEAIRRTHNGESVSYLFSHVPL.

96-101 (RQDKKD) lines the ATP pocket. Asp128, His130, Asp139, and Asp143 together coordinate Mg(2+). His130 is an ATP binding site. Residues 212–227 (KDRVAILVDDMADTCG) are binding of phosphoribosylpyrophosphate.

The protein belongs to the ribose-phosphate pyrophosphokinase family. As to quaternary structure, homodimer. The active form is probably a hexamer composed of 3 homodimers. Requires Mg(2+) as cofactor.

The catalysed reaction is D-ribose 5-phosphate + ATP = 5-phospho-alpha-D-ribose 1-diphosphate + AMP + H(+). The protein operates within metabolic intermediate biosynthesis; 5-phospho-alpha-D-ribose 1-diphosphate biosynthesis; 5-phospho-alpha-D-ribose 1-diphosphate from D-ribose 5-phosphate (route I): step 1/1. Its activity is regulated as follows. Activated by magnesium and inorganic phosphate. Competitively or non-competitively inhibited by ADP, 2,3-bisphosphoglyceride or GDP. Catalyzes the synthesis of phosphoribosylpyrophosphate (PRPP) that is essential for nucleotide synthesis. In Mus musculus (Mouse), this protein is Ribose-phosphate pyrophosphokinase 2 (Prps2).